The primary structure comprises 467 residues: Megakaryocyte-associated tyrosine-protein kinase (467 aa).

The tract at residues 1 to 20 (MPTQRWAPGTQCMTKCENSR) is disordered. An SH3 domain is found at 7 to 69 (APGTQCMTKC…AAAALRQREA (63 aa)). Positions 81–170 (WFHGKISGQE…AICTKLVKPK (90 aa)) constitute an SH2 domain. The region spanning 194 to 443 (LTLGAQIGEG…IVEKLGRELR (250 aa)) is the Protein kinase domain. ATP-binding positions include 200–208 (IGEGEFGAV) and Lys-221. The active-site Proton acceptor is Asp-311. Residues 445–467 (VGVAAPAGGQEAEGSAPTRSQDP) are disordered.

Belongs to the protein kinase superfamily. Tyr protein kinase family. CSK subfamily. Interacts with KIT. As to expression, enriched in lymphoid tissues.

It is found in the cytoplasm. Its subcellular location is the membrane. The catalysed reaction is L-tyrosyl-[protein] + ATP = O-phospho-L-tyrosyl-[protein] + ADP + H(+). In terms of biological role, could play a significant role in the signal transduction of hematopoietic cells. May regulate tyrosine kinase activity of SRC-family members in brain. The protein is Megakaryocyte-associated tyrosine-protein kinase (Matk) of Rattus norvegicus (Rat).